The following is a 955-amino-acid chain: MAM domain-containing glycosylphosphatidylinositol anchor protein 1 (955 aa).

The N-terminal stretch at 1–18 (MEVTCLLLLALIPFHCRG) is a signal peptide. 2 consecutive Ig-like domains span residues 24 to 123 (PAQA…KSIR) and 132 to 230 (PMLT…KAIT). N-linked (GlcNAc...) asparagine glycosylation is found at N42 and N90. Disulfide bonds link C60–C108 and C157–C214. Residues N235, N247, N257, N307, and N331 are each glycosylated (N-linked (GlcNAc...) asparagine). One can recognise an Ig-like 3 domain in the interval 240–323 (PALKLSVNET…VGNPAKKTVN (84 aa)). Cysteines 262 and 308 form a disulfide. Ig-like domains lie at 338 to 432 (PDVI…VEVN), 440 to 532 (PTIS…AQVQ), and 539 to 631 (PEVE…FQVS). C357 and C415 are oxidised to a cystine. N432 is a glycosylation site (N-linked (GlcNAc...) asparagine). Cystine bridges form between C463–C514 and C560–C615. One can recognise a Fibronectin type-III domain in the interval 643 to 743 (TPNPTRSHKL…SRIIHYTEPI (101 aa)). N-linked (GlcNAc...) asparagine glycosylation is found at N655 and N747. In terms of domain architecture, MAM spans 751–918 (NTCHFEDEKI…VTLKKGECPR (168 aa)). The span at 779-788 (LTQNPKRSPN) shows a compositional bias: polar residues. The segment at 779-798 (LTQNPKRSPNTGPPTDISGT) is disordered. The N-linked (GlcNAc...) asparagine glycan is linked to N826. The GPI-anchor amidated serine moiety is linked to residue S932. A propeptide spans 933-955 (GAPCQSSPQLWGPMAIFLLALQR) (removed in mature form).

Interacts heterophilically through its MAM domain with proteins in axon-rich regions and through its Ig-like domains with proteins in differentiating muscle. Interacts (through the Ig-like domains) with NLGN2. Has been found in brain, heart, skeletal muscle and kidney. Found to be overexpressed in tumor tissues.

It is found in the cell membrane. Its function is as follows. Required for radial migration of cortical neurons in the superficial layer of the neocortex. Plays a role in the formation or maintenance of inhibitory synapses. May function by inhibiting the activity of NLGN2. This is MAM domain-containing glycosylphosphatidylinositol anchor protein 1 (MDGA1) from Homo sapiens (Human).